The primary structure comprises 244 residues: Acetylglutamate kinase (244 aa).

Substrate is bound by residues 40 to 41 (GG), R62, and N155.

The protein belongs to the acetylglutamate kinase family. ArgB subfamily.

Its subcellular location is the cytoplasm. The enzyme catalyses N-acetyl-L-glutamate + ATP = N-acetyl-L-glutamyl 5-phosphate + ADP. The protein operates within amino-acid biosynthesis; L-arginine biosynthesis; N(2)-acetyl-L-ornithine from L-glutamate: step 2/4. Its function is as follows. Catalyzes the ATP-dependent phosphorylation of N-acetyl-L-glutamate. This Leuconostoc mesenteroides subsp. mesenteroides (strain ATCC 8293 / DSM 20343 / BCRC 11652 / CCM 1803 / JCM 6124 / NCDO 523 / NBRC 100496 / NCIMB 8023 / NCTC 12954 / NRRL B-1118 / 37Y) protein is Acetylglutamate kinase.